We begin with the raw amino-acid sequence, 99 residues long: U1-theraphotoxin-Lsp1a (99 aa).

A signal peptide spans 1 to 23 (MRSLTLAALLLCSLLLVFHTSAA). The propeptide occupies 24–50 (AELEAQEGHLMIPGDTDTALETVDDER). Cystine bridges form between Cys-54/Cys-67, Cys-58/Cys-91, Cys-72/Cys-74, and Cys-85/Cys-96.

This sequence belongs to the neurotoxin 12 (Hwtx-2) family. 04 (lasiotoxin) subfamily. Expressed by the venom gland.

The protein localises to the secreted. In terms of biological role, toxin that causes irreversible contractile paralysis into adult Aedes aegypti resulting in 100% mortality after 24 hours. The chain is U1-theraphotoxin-Lsp1a from Lasiodora sp. (strain IBSP 8539) (Brazilian salmon pink birdeater).